Reading from the N-terminus, the 842-residue chain is Protein translocase subunit SecA (842 aa).

Residues Q91, 109 to 113 (GEGKT), and D498 each bind ATP. A compositionally biased stretch (basic and acidic residues) spans 798–824 (QGQHVSAEDGKEKVKPQPVVKDNHIGR). The tract at residues 798–827 (QGQHVSAEDGKEKVKPQPVVKDNHIGRNDP) is disordered. Zn(2+)-binding residues include C828, C830, C839, and C840.

The protein belongs to the SecA family. As to quaternary structure, monomer and homodimer. Part of the essential Sec protein translocation apparatus which comprises SecA, SecYEG and auxiliary proteins SecDF. Other proteins may also be involved. Zn(2+) is required as a cofactor.

Its subcellular location is the cell membrane. It localises to the cytoplasm. The catalysed reaction is ATP + H2O + cellular proteinSide 1 = ADP + phosphate + cellular proteinSide 2.. Functionally, part of the Sec protein translocase complex. Interacts with the SecYEG preprotein conducting channel. Has a central role in coupling the hydrolysis of ATP to the transfer of proteins into and across the cell membrane, serving as an ATP-driven molecular motor driving the stepwise translocation of polypeptide chains across the membrane. The protein is Protein translocase subunit SecA of Staphylococcus carnosus (strain TM300).